A 215-amino-acid chain; its full sequence is Cytochrome b6 (215 aa).

A helical transmembrane segment spans residues 32–52 (IFYCFGGIVFTCFLVQVATGF). Residue C35 coordinates heme c. The heme b site is built by H86 and H100. 3 helical membrane passes run 90 to 110 (ASMM…TGGF), 116 to 136 (LTWV…VTGY), and 186 to 206 (AHTF…FLMI). Heme b-binding residues include H187 and H202.

This sequence belongs to the cytochrome b family. PetB subfamily. As to quaternary structure, the 4 large subunits of the cytochrome b6-f complex are cytochrome b6, subunit IV (17 kDa polypeptide, PetD), cytochrome f and the Rieske protein, while the 4 small subunits are PetG, PetL, PetM and PetN. The complex functions as a dimer. The cofactor is heme b. It depends on heme c as a cofactor.

It localises to the plastid. It is found in the chloroplast thylakoid membrane. Functionally, component of the cytochrome b6-f complex, which mediates electron transfer between photosystem II (PSII) and photosystem I (PSI), cyclic electron flow around PSI, and state transitions. The sequence is that of Cytochrome b6 from Trieres chinensis (Marine centric diatom).